Reading from the N-terminus, the 481-residue chain is Cysteine--tRNA ligase (481 aa).

Cys-27 serves as a coordination point for Zn(2+). The 'HIGH' region signature appears at 29 to 39 (PTVYNYAHIGN). Residues Cys-222, His-247, and Glu-251 each coordinate Zn(2+). The 'KMSKS' region signature appears at 279-283 (KMSKS). An ATP-binding site is contributed by Lys-282.

Belongs to the class-I aminoacyl-tRNA synthetase family. Monomer. Requires Zn(2+) as cofactor.

It localises to the cytoplasm. The catalysed reaction is tRNA(Cys) + L-cysteine + ATP = L-cysteinyl-tRNA(Cys) + AMP + diphosphate. The polypeptide is Cysteine--tRNA ligase (Borrelia hermsii (strain HS1 / DAH)).